Here is a 313-residue protein sequence, read N- to C-terminus: Homoserine O-acetyltransferase (313 aa).

Cysteine 144 serves as the catalytic Acyl-thioester intermediate. The substrate site is built by lysine 165 and serine 194. Residue histidine 236 is the Proton acceptor of the active site. Glutamate 238 is a catalytic residue. Residue arginine 250 participates in substrate binding.

This sequence belongs to the MetA family.

It localises to the cytoplasm. The enzyme catalyses L-homoserine + acetyl-CoA = O-acetyl-L-homoserine + CoA. Its pathway is amino-acid biosynthesis; L-methionine biosynthesis via de novo pathway; O-acetyl-L-homoserine from L-homoserine: step 1/1. Functionally, transfers an acetyl group from acetyl-CoA to L-homoserine, forming acetyl-L-homoserine. In Jannaschia sp. (strain CCS1), this protein is Homoserine O-acetyltransferase.